The chain runs to 621 residues: tRNA 5-methylaminomethyl-2-thiouridine biosynthesis bifunctional protein MnmC (621 aa).

The tract at residues 1 to 222 (MKNANLSFKG…KRQMSSAVLE (222 aa)) is tRNA (mnm(5)s(2)U34)-methyltransferase. Residues 250-621 (IGTGVAGLAT…LIRKLKKGLK (372 aa)) form an FAD-dependent cmnm(5)s(2)U34 oxidoreductase region.

This sequence in the N-terminal section; belongs to the methyltransferase superfamily. tRNA (mnm(5)s(2)U34)-methyltransferase family. It in the C-terminal section; belongs to the DAO family. FAD is required as a cofactor.

It localises to the cytoplasm. It carries out the reaction 5-aminomethyl-2-thiouridine(34) in tRNA + S-adenosyl-L-methionine = 5-methylaminomethyl-2-thiouridine(34) in tRNA + S-adenosyl-L-homocysteine + H(+). Functionally, catalyzes the last two steps in the biosynthesis of 5-methylaminomethyl-2-thiouridine (mnm(5)s(2)U) at the wobble position (U34) in tRNA. Catalyzes the FAD-dependent demodification of cmnm(5)s(2)U34 to nm(5)s(2)U34, followed by the transfer of a methyl group from S-adenosyl-L-methionine to nm(5)s(2)U34, to form mnm(5)s(2)U34. The protein is tRNA 5-methylaminomethyl-2-thiouridine biosynthesis bifunctional protein MnmC of Campylobacter concisus (strain 13826).